We begin with the raw amino-acid sequence, 320 residues long: Methionyl-tRNA formyltransferase (320 aa).

112–115 is a (6S)-5,6,7,8-tetrahydrofolate binding site; it reads SLLP.

The protein belongs to the Fmt family.

It carries out the reaction L-methionyl-tRNA(fMet) + (6R)-10-formyltetrahydrofolate = N-formyl-L-methionyl-tRNA(fMet) + (6S)-5,6,7,8-tetrahydrofolate + H(+). In terms of biological role, attaches a formyl group to the free amino group of methionyl-tRNA(fMet). The formyl group appears to play a dual role in the initiator identity of N-formylmethionyl-tRNA by promoting its recognition by IF2 and preventing the misappropriation of this tRNA by the elongation apparatus. The chain is Methionyl-tRNA formyltransferase from Allorhizobium ampelinum (strain ATCC BAA-846 / DSM 112012 / S4) (Agrobacterium vitis (strain S4)).